Reading from the N-terminus, the 305-residue chain is UDP-3-O-acyl-N-acetylglucosamine deacetylase (305 aa).

Positions 79, 238, and 242 each coordinate Zn(2+). H265 acts as the Proton donor in catalysis.

It belongs to the LpxC family. It depends on Zn(2+) as a cofactor.

The enzyme catalyses a UDP-3-O-[(3R)-3-hydroxyacyl]-N-acetyl-alpha-D-glucosamine + H2O = a UDP-3-O-[(3R)-3-hydroxyacyl]-alpha-D-glucosamine + acetate. Its pathway is glycolipid biosynthesis; lipid IV(A) biosynthesis; lipid IV(A) from (3R)-3-hydroxytetradecanoyl-[acyl-carrier-protein] and UDP-N-acetyl-alpha-D-glucosamine: step 2/6. Catalyzes the hydrolysis of UDP-3-O-myristoyl-N-acetylglucosamine to form UDP-3-O-myristoylglucosamine and acetate, the committed step in lipid A biosynthesis. The polypeptide is UDP-3-O-acyl-N-acetylglucosamine deacetylase (Citrobacter koseri (strain ATCC BAA-895 / CDC 4225-83 / SGSC4696)).